The primary structure comprises 36 residues: Pancreatic polypeptide (36 aa).

Tyrosine 36 bears the Tyrosine amide mark.

This sequence belongs to the NPY family.

It localises to the secreted. Hormone secreted by pancreatic cells that acts as a regulator of pancreatic and gastrointestinal functions probably by signaling through the G protein-coupled receptor NPY4R2. The sequence is that of Pancreatic polypeptide (PPY) from Oryctolagus cuniculus (Rabbit).